A 686-amino-acid polypeptide reads, in one-letter code: Myb-related protein B (686 aa).

Positions 1 to 28 are disordered; that stretch reads MARRSRGEDQDELHCQDTDSDVPEQRDG. 3 HTH myb-type domains span residues 26–77, 78–133, and 134–184; these read RDGR…LRVL, NPDL…NPEV, and KKSS…KRKV. DNA-binding regions (H-T-H motif) lie at residues 54–77, 106–129, and 157–180; these read WKFL…LRVL, WTLI…HNHL, and WAEI…NSTI. Disordered regions lie at residues 315 to 355 and 493 to 512; these read CDLT…VTEY and YVVD…LEKY. The segment covering 326–343 has biased composition (low complexity); the sequence is PSAGSSSSSNSPVRQTPS.

In terms of assembly, component of the DREAM complex. In terms of tissue distribution, expressed in hematopoietic and non hematopoietic cells.

It is found in the nucleus. In terms of biological role, represses v-myb- and c-myb-mediated activation of the mim-1 gene, probably by competing with other myb proteins for binding sites. It is an inhibitory member of the myb family. The sequence is that of Myb-related protein B (MYBL2) from Gallus gallus (Chicken).